A 251-amino-acid polypeptide reads, in one-letter code: uncharacterized protein (251 aa).

Transmembrane regions (helical) follow at residues 56–76 (LAVVIAQLTIGVLGNSLTLVA), 104–124 (IITVGITNVILFLLFVAFLLT), 184–204 (HGFVYHFIAYFVLVSSLLIIV), and 208–228 (YLIADVITTYATSLLILANIS).

The protein localises to the membrane. This is an uncharacterized protein from Caenorhabditis elegans.